The sequence spans 235 residues: Adenosine 5'-phosphosulfate reductase (235 aa).

4 residues coordinate [4Fe-4S] cluster: C121, C122, C204, and C207. The Nucleophile; cysteine thiosulfonate intermediate role is filled by C230.

The protein belongs to the PAPS reductase family. CysH subfamily. Requires [4Fe-4S] cluster as cofactor.

The protein resides in the cytoplasm. It catalyses the reaction [thioredoxin]-disulfide + sulfite + AMP + 2 H(+) = adenosine 5'-phosphosulfate + [thioredoxin]-dithiol. The protein operates within sulfur metabolism; hydrogen sulfide biosynthesis; sulfite from sulfate. In terms of biological role, catalyzes the formation of sulfite from adenosine 5'-phosphosulfate (APS) using thioredoxin as an electron donor. The polypeptide is Adenosine 5'-phosphosulfate reductase (Anoxybacillus flavithermus (strain DSM 21510 / WK1)).